A 94-amino-acid polypeptide reads, in one-letter code: DASH complex subunit DAD5 (94 aa).

Residues 1-20 (MRRSTIVPTSRTSSSSPSPS) are compositionally biased toward low complexity. A disordered region spans residues 1-25 (MRRSTIVPTSRTSSSSPSPSQMKSF).

This sequence belongs to the DASH complex HSK3 family. As to quaternary structure, component of the DASH complex consisting of ask1, dad1, dad2, dad3, dad4, dam1, duo1, dad5, spc19 and spc34, with a stoichiometry of one copy of each subunit per complex. Multiple DASH complexes oligomerize to form a ring that encircles spindle microtubules and organizes the rod-like NDC80 complexes of the outer kinetochore. DASH complex oligomerization strengthens microtubule attachments. On cytoplasmic microtubules, DASH complexes appear to form patches instead of rings.

It is found in the nucleus. The protein localises to the cytoplasm. Its subcellular location is the cytoskeleton. The protein resides in the spindle. It localises to the chromosome. It is found in the centromere. The protein localises to the kinetochore. Component of the DASH complex that connects microtubules with kinetochores and couples microtubule depolymerisation to chromosome movement; it is involved in retrieving kinetochores to the spindle poles before their re-orientation on the spindle in early mitosis and allows microtubule depolymerization to pull chromosomes apart and resist detachment during anaphase. Kinetochores, consisting of a centromere-associated inner segment and a microtubule-contacting outer segment, play a crucial role in chromosome segregation by mediating the physical connection between centromeric DNA and microtubules. Kinetochores also serve as an input point for the spindle assembly checkpoint, which delays anaphase until all chromosomes have bioriented on the mitotic spindle. The DASH complex mediates bipolar kinetochore-microtubule attachments and facilitates the formation of additional interactions between outer kinetochore components and spindle microtubules. During chromosome movement along the microtubule, it is required both for the sliding of kinetochores along the lateral side of the microtubule and also for microtubule end-on pulling on the kinetochore. Modulates cytoplasmic microtubule dynamics by tracking the plus-end of shortening microtubules and slowing their depolymerization. This is DASH complex subunit DAD5 from Schizosaccharomyces pombe (strain 972 / ATCC 24843) (Fission yeast).